The sequence spans 362 residues: Histidinol-phosphate aminotransferase 2 (362 aa).

K222 is modified (N6-(pyridoxal phosphate)lysine).

This sequence belongs to the class-II pyridoxal-phosphate-dependent aminotransferase family. Histidinol-phosphate aminotransferase subfamily. In terms of assembly, homodimer. Requires pyridoxal 5'-phosphate as cofactor.

The enzyme catalyses L-histidinol phosphate + 2-oxoglutarate = 3-(imidazol-4-yl)-2-oxopropyl phosphate + L-glutamate. Its pathway is amino-acid biosynthesis; L-histidine biosynthesis; L-histidine from 5-phospho-alpha-D-ribose 1-diphosphate: step 7/9. This chain is Histidinol-phosphate aminotransferase 2, found in Carboxydothermus hydrogenoformans (strain ATCC BAA-161 / DSM 6008 / Z-2901).